The following is a 142-amino-acid chain: MFQGASSLALDTKGRLSVPTRHRDVLSATASSQLTITKHPHGCLMIFPRNEWEKFRERIASLPMQAQWWKRIFLGNAMDVDMDATGRVLVSPELRQAAGISKDAVLLGMGSYFELWDAATYAAQEAEQMKGEMPDVFRDFSF.

SpoVT-AbrB domains lie at alanine 5 to glutamate 51 and alanine 77 to threonine 120.

Belongs to the MraZ family. Forms oligomers.

It is found in the cytoplasm. The protein resides in the nucleoid. The chain is Transcriptional regulator MraZ from Polaromonas sp. (strain JS666 / ATCC BAA-500).